The sequence spans 1058 residues: Non-canonical non-ribosomal peptide synthetase FUB8 (1058 aa).

The tract at residues 43–365 is adenylation (A) domain; it reads EISRDEPDRV…LASVVMHPDE (323 aa). Positions 566 to 643 constitute a Carrier domain; it reads TTEDVVRSGI…QLSHSVWTHL (78 aa). Serine 601 is subject to O-(pantetheine 4'-phosphoryl)serine. Residues 680-921 are thioester reductase (TR) domain; sequence LTGTTGEIGS…IPIDLLAEVI (242 aa).

Its pathway is mycotoxin biosynthesis. In terms of biological role, non-canonical non-ribosomal peptide synthetase; part of the gene cluster that mediates the biosynthesis of fusaric acid, a mycotoxin with low to moderate toxicity to animals and humans, but with high phytotoxic properties. L-aspartate is suggested as fusaric acid amino acid precursor that is activated and further processed to O-acetyl-L-homoserine by cluster enzymes aspartate kinase FUB3 and homoserine O-acetyltransferase FUB5, as well as enzymes of the primary metabolism. The polyketide synthase (PKS) FUB1 generates the triketide trans-2-hexenal which is presumptively released by the hydrolase FUB4 and linked to the NRPS-bound amino acid precursor by NAD(P)-dependent dehydrogenase FUB6. FUB1, FUB4, and the non-canonical NRPS Fub8 may form an enzyme complex. Further processing of the NRPS-bound intermediate might be carried out by FUB6 and the sulfhydrylase FUB7, enabling a spontaneous electrocyclization to close the carbon backbone of fusaric acid. Dihydrofusaric acid is likely to be released via reduction by the thioester reductase (TR) domain of FUB8 whereupon the final oxidation to fusaric acid may (also) be performed by the FMN-dependent dehydrogenase FUB9. This is Non-canonical non-ribosomal peptide synthetase FUB8 from Gibberella moniliformis (strain M3125 / FGSC 7600) (Maize ear and stalk rot fungus).